Reading from the N-terminus, the 831-residue chain is Phenylalanine--tRNA ligase beta subunit (831 aa).

The tRNA-binding domain occupies 44–155 (GPVDGPVTVG…GAAEPGADGA (112 aa)). A B5 domain is found at 414–489 (WSPPPIRMGV…RLEGLEVIPS (76 aa)). Mg(2+)-binding residues include D467, D473, E476, and E477. Residues 737–830 (SPYPAVFQDV…AAERVGAVLR (94 aa)) form the FDX-ACB domain.

This sequence belongs to the phenylalanyl-tRNA synthetase beta subunit family. Type 1 subfamily. As to quaternary structure, tetramer of two alpha and two beta subunits. Mg(2+) serves as cofactor.

It is found in the cytoplasm. The catalysed reaction is tRNA(Phe) + L-phenylalanine + ATP = L-phenylalanyl-tRNA(Phe) + AMP + diphosphate + H(+). This is Phenylalanine--tRNA ligase beta subunit from Mycobacterium bovis (strain ATCC BAA-935 / AF2122/97).